The primary structure comprises 508 residues: Purine-cytosine permease fcyB (508 aa).

Residues 1-72 (MAGAFDFDLE…AEQTDTSVFN (72 aa)) are Cytoplasmic-facing. Residues 73 to 93 (IGSMWLAANMVVSSFAIGVLG) form a helical membrane-spanning segment. Topologically, residues 94–104 (KSVYSLGFVDA) are extracellular. Residues 105–125 (ILTVLFFNLLGIMTVCFFSCF) traverse the membrane as a helical segment. At 126–147 (GPFGLRQMVFSRLWFGWYVTKG) the chain is on the cytoplasmic side. Residues 148-168 (FAVLNILACLGWSAANAIVGA) traverse the membrane as a helical segment. The Extracellular portion of the chain corresponds to 169–177 (QMLHAVNSD). The chain crosses the membrane as a helical span at residues 178–198 (VPGFAAILIISICTLLVTFAG). Residues 199–200 (YK) are Cytoplasmic-facing. The chain crosses the membrane as a helical span at residues 201–221 (VVHLYEYWSWIPTFIVFMIIL). The Extracellular portion of the chain corresponds to 222–243 (GTFAHSGDFQNIPMGVGTSEMG). A helical transmembrane segment spans residues 244–264 (SVLSFGSAVYGFATGWTSYAA). Residues 265–278 (DYTVYQPANRSKRK) are Cytoplasmic-facing. The chain crosses the membrane as a helical span at residues 279–299 (IFLSTWLGLIVPLLFVEMLGV). Over 300–323 (AVMTATDIKGSKYDVGYATSGNGG) the chain is Extracellular. Residues 324–344 (LIAAVLQPLGGFGDFCLVILA) traverse the membrane as a helical segment. The Cytoplasmic portion of the chain corresponds to 345 to 374 (LSIVANNCPNFYSVALTVQVLSRYAQRVPR). Residues 375–395 (FIWTLFGTGVSIAIAIPGYSH) form a helical membrane-spanning segment. Over 396–404 (FETVLENFM) the chain is Extracellular. A helical transmembrane segment spans residues 405–425 (NFIAYWLAIYSAIAIMDHFVF). At 426 to 442 (KRGFSGYVVENFDKREK) the chain is on the cytoplasmic side. The chain crosses the membrane as a helical span at residues 443–463 (LPVGIAATIAFGFGVAGMITG). Topologically, residues 464–477 (MSQPWYVGPIARHA) are extracellular. The helical transmembrane segment at 478-498 (AGGDVGFELGFAFAAFSYLCL) threads the bilayer. Topologically, residues 499–508 (RPFEIKFFGR) are cytoplasmic.

The protein belongs to the purine-cytosine permease (2.A.39) family.

It localises to the cell membrane. Its function is as follows. This permease has a broad specificity towards purines, and also transports cytosine, but neither uracil nor thymine. Contributes very little in purine uptake. Its major role may be the uptake of cytosine. The polypeptide is Purine-cytosine permease fcyB (fcyB) (Emericella nidulans (strain FGSC A4 / ATCC 38163 / CBS 112.46 / NRRL 194 / M139) (Aspergillus nidulans)).